The following is a 460-amino-acid chain: ATP synthase subunit beta (460 aa).

150–157 (GGAGVGKT) is a binding site for ATP.

It belongs to the ATPase alpha/beta chains family. As to quaternary structure, F-type ATPases have 2 components, CF(1) - the catalytic core - and CF(0) - the membrane proton channel. CF(1) has five subunits: alpha(3), beta(3), gamma(1), delta(1), epsilon(1). CF(0) has three main subunits: a(1), b(2) and c(9-12). The alpha and beta chains form an alternating ring which encloses part of the gamma chain. CF(1) is attached to CF(0) by a central stalk formed by the gamma and epsilon chains, while a peripheral stalk is formed by the delta and b chains.

Its subcellular location is the cell inner membrane. It carries out the reaction ATP + H2O + 4 H(+)(in) = ADP + phosphate + 5 H(+)(out). Its function is as follows. Produces ATP from ADP in the presence of a proton gradient across the membrane. The catalytic sites are hosted primarily by the beta subunits. The sequence is that of ATP synthase subunit beta from Pectobacterium atrosepticum (strain SCRI 1043 / ATCC BAA-672) (Erwinia carotovora subsp. atroseptica).